Here is a 167-residue protein sequence, read N- to C-terminus: Sulfopyruvate decarboxylase subunit alpha (167 aa).

The protein belongs to the ComD family. As to quaternary structure, heterododecamer composed of 6 subunits alpha and 6 subunits beta.

The catalysed reaction is 3-sulfopyruvate + H(+) = sulfoacetaldehyde + CO2. It participates in cofactor biosynthesis; coenzyme M biosynthesis; sulfoacetaldehyde from phosphoenolpyruvate and sulfite: step 4/4. Functionally, involved in the biosynthesis of the coenzyme M (2-mercaptoethanesulfonic acid). Catalyzes the decarboxylation of sulfopyruvate to sulfoacetaldehyde. This is Sulfopyruvate decarboxylase subunit alpha (comD) from Methanococcus maripaludis (strain DSM 14266 / JCM 13030 / NBRC 101832 / S2 / LL).